The chain runs to 624 residues: Diatom spindle kinesin-1 (624 aa).

Residues 1-59 (MNAANRRKSTSTVGITGRKDATRMKIEQMEKERKERRKTMMQRKEARKQEHMKNIEAGN) are disordered. Residues 1–85 (MNAANRRKST…QENKIGDKSP (85 aa)) are globular. Basic and acidic residues-rich tracts occupy residues 17–33 (GRKDATRMKIEQMEKER) and 42–54 (QRKEARKQEHMKN). Residues 95–411 (NICIAVRKRP…LRYADRIKEQ (317 aa)) form the Kinesin motor domain. 186–193 (GQTGSGKT) is a binding site for ATP. A coiled-coil region spans residues 426 to 624 (SNREIMPSKE…LARQVQLTQY (199 aa)). Residues 478–511 (VDEEEADDEEGDYEEESEDLDYEDSEGQDYEEAV) are compositionally biased toward acidic residues. The disordered stretch occupies residues 478 to 528 (VDEEEADDEEGDYEEESEDLDYEDSEGQDYEEAVESQYDHSQEAQEGEEEL).

The protein belongs to the TRAFAC class myosin-kinesin ATPase superfamily. Kinesin family. MCAK/KIF2 subfamily.

It is found in the cytoplasm. It localises to the cytoskeleton. Functionally, involved in anaphase spindle elongation. This Cylindrotheca fusiformis (Marine diatom) protein is Diatom spindle kinesin-1 (DSK1).